The sequence spans 269 residues: Shikimate dehydrogenase (NADP(+)) (269 aa).

Residues 17–19 (SKS) and Thr-64 each bind shikimate. Lys-68 functions as the Proton acceptor in the catalytic mechanism. Glu-80 serves as a coordination point for NADP(+). Shikimate-binding residues include Asn-89 and Asp-105. NADP(+) is bound by residues 130 to 134 (GAGGA), 154 to 159 (NRTRAK), and Met-213. Residue Tyr-215 participates in shikimate binding. Residue Gly-237 coordinates NADP(+).

It belongs to the shikimate dehydrogenase family. Homodimer.

The enzyme catalyses shikimate + NADP(+) = 3-dehydroshikimate + NADPH + H(+). It functions in the pathway metabolic intermediate biosynthesis; chorismate biosynthesis; chorismate from D-erythrose 4-phosphate and phosphoenolpyruvate: step 4/7. In terms of biological role, involved in the biosynthesis of the chorismate, which leads to the biosynthesis of aromatic amino acids. Catalyzes the reversible NADPH linked reduction of 3-dehydroshikimate (DHSA) to yield shikimate (SA). In Neisseria lactamica, this protein is Shikimate dehydrogenase (NADP(+)).